The sequence spans 159 residues: ATP synthase subunit b (159 aa).

A helical transmembrane segment spans residues 8-28 (ILATIINFIILILILKHFFWD).

This sequence belongs to the ATPase B chain family. As to quaternary structure, F-type ATPases have 2 components, F(1) - the catalytic core - and F(0) - the membrane proton channel. F(1) has five subunits: alpha(3), beta(3), gamma(1), delta(1), epsilon(1). F(0) has three main subunits: a(1), b(2) and c(10-14). The alpha and beta chains form an alternating ring which encloses part of the gamma chain. F(1) is attached to F(0) by a central stalk formed by the gamma and epsilon chains, while a peripheral stalk is formed by the delta and b chains.

The protein resides in the cell membrane. F(1)F(0) ATP synthase produces ATP from ADP in the presence of a proton or sodium gradient. F-type ATPases consist of two structural domains, F(1) containing the extramembraneous catalytic core and F(0) containing the membrane proton channel, linked together by a central stalk and a peripheral stalk. During catalysis, ATP synthesis in the catalytic domain of F(1) is coupled via a rotary mechanism of the central stalk subunits to proton translocation. In terms of biological role, component of the F(0) channel, it forms part of the peripheral stalk, linking F(1) to F(0). This chain is ATP synthase subunit b, found in Clostridium perfringens (strain ATCC 13124 / DSM 756 / JCM 1290 / NCIMB 6125 / NCTC 8237 / Type A).